The following is a 181-amino-acid chain: Adenine phosphoribosyltransferase (181 aa).

It belongs to the purine/pyrimidine phosphoribosyltransferase family. As to quaternary structure, homodimer.

The protein resides in the cytoplasm. The catalysed reaction is AMP + diphosphate = 5-phospho-alpha-D-ribose 1-diphosphate + adenine. It participates in purine metabolism; AMP biosynthesis via salvage pathway; AMP from adenine: step 1/1. In terms of biological role, catalyzes a salvage reaction resulting in the formation of AMP, that is energically less costly than de novo synthesis. This Brucella suis (strain ATCC 23445 / NCTC 10510) protein is Adenine phosphoribosyltransferase.